A 340-amino-acid chain; its full sequence is Heat-inducible transcription repressor HrcA (340 aa).

Belongs to the HrcA family.

In terms of biological role, negative regulator of class I heat shock genes (grpE-dnaK-dnaJ and groELS operons). Prevents heat-shock induction of these operons. The polypeptide is Heat-inducible transcription repressor HrcA (Mycoplasma mycoides subsp. mycoides SC (strain CCUG 32753 / NCTC 10114 / PG1)).